We begin with the raw amino-acid sequence, 148 residues long: Arginine repressor (148 aa).

Belongs to the ArgR family.

Its subcellular location is the cytoplasm. Its pathway is amino-acid biosynthesis; L-arginine biosynthesis [regulation]. Functionally, regulates arginine biosynthesis genes. This chain is Arginine repressor, found in Prosthecochloris aestuarii (strain DSM 271 / SK 413).